A 24-amino-acid polypeptide reads, in one-letter code: Conotoxin PIVE (24 aa).

3 cysteine pairs are disulfide-bonded: C2–C10, C3–C15, and C13–C19. K24 bears the Lysine amide mark.

This sequence belongs to the conotoxin A superfamily. As to expression, expressed by the venom duct.

The protein resides in the secreted. Functionally, probable neurotoxin with ion channel inhibitor activity. In vivo, elicits dose-dependently excitatory activity upon injection into fish. Its action is slowly reversible. The chain is Conotoxin PIVE from Conus purpurascens (Purple cone).